The primary structure comprises 308 residues: Acetyl-coenzyme A carboxylase carboxyl transferase subunit beta 1 (308 aa).

The 270-residue stretch at 25 to 294 (VWTKCTSCEQ…PLVVSVNESP (270 aa)) folds into the CoA carboxyltransferase N-terminal domain. Zn(2+) is bound by residues Cys-29, Cys-32, Cys-48, and Cys-51. The C4-type zinc finger occupies 29–51 (CTSCEQVLYHAELERNLEVCPKC). The tract at residues 288 to 308 (VSVNESPNEEPYSVPEVDEKG) is disordered.

The protein belongs to the AccD/PCCB family. Acetyl-CoA carboxylase is a heterohexamer composed of biotin carboxyl carrier protein (AccB), biotin carboxylase (AccC) and two subunits each of ACCase subunit alpha (AccA) and ACCase subunit beta (AccD). Zn(2+) is required as a cofactor.

The protein localises to the cytoplasm. The enzyme catalyses N(6)-carboxybiotinyl-L-lysyl-[protein] + acetyl-CoA = N(6)-biotinyl-L-lysyl-[protein] + malonyl-CoA. The protein operates within lipid metabolism; malonyl-CoA biosynthesis; malonyl-CoA from acetyl-CoA: step 1/1. Component of the acetyl coenzyme A carboxylase (ACC) complex. Biotin carboxylase (BC) catalyzes the carboxylation of biotin on its carrier protein (BCCP) and then the CO(2) group is transferred by the transcarboxylase to acetyl-CoA to form malonyl-CoA. This Vibrio parahaemolyticus serotype O3:K6 (strain RIMD 2210633) protein is Acetyl-coenzyme A carboxylase carboxyl transferase subunit beta 1.